A 423-amino-acid polypeptide reads, in one-letter code: Cop9 signalosome complex subunit 12 (423 aa).

One can recognise a PCI domain in the interval 232–418; sequence GFFHLNEALL…RCIVFSKKEP (187 aa).

This sequence belongs to the CSN12 family. As to quaternary structure, component of a COP9 signalosome-like (CSN) complex, composed of RRI1/CSN5, CSN9, RRI2/CSN10, PCI8/CSN11, CSN12 and CSI1. In the complex, it probably interacts directly with RRI1/CSN5, CSN9, RRI2/CSN10 and CSI1. Interacts with SEM1 and THP3.

It is found in the cytoplasm. It localises to the nucleus. Component of the COP9 signalosome (CSN) complex that acts as an regulator of the ubiquitin (Ubl) conjugation pathway by mediating the deneddylation of the cullin subunit of SCF-type E3 ubiquitin-protein ligase complexes. The CSN complex is involved in the regulation of the mating pheromone response. CSN12 forms a complex with THP3 that is recruited to transcribed genes and required for transcription elongation. This is Cop9 signalosome complex subunit 12 (CSN12) from Saccharomyces cerevisiae (strain ATCC 204508 / S288c) (Baker's yeast).